A 609-amino-acid chain; its full sequence is Threonine--tRNA ligase (609 aa).

An editing domain region spans residues M1–E143. Catalytic regions lie at residues P195–P491 and R196–P491. Zn(2+)-binding residues include C288, H339, and H460.

The protein belongs to the class-II aminoacyl-tRNA synthetase family. As to quaternary structure, homodimer. The cofactor is Zn(2+).

It is found in the cytoplasm. The enzyme catalyses tRNA(Thr) + L-threonine + ATP = L-threonyl-tRNA(Thr) + AMP + diphosphate + H(+). Its function is as follows. Catalyzes the attachment of threonine to tRNA(Thr) in a two-step reaction: L-threonine is first activated by ATP to form Thr-AMP and then transferred to the acceptor end of tRNA(Thr). Also edits incorrectly charged L-seryl-tRNA(Thr). In Pyrobaculum neutrophilum (strain DSM 2338 / JCM 9278 / NBRC 100436 / V24Sta) (Thermoproteus neutrophilus), this protein is Threonine--tRNA ligase.